The primary structure comprises 246 residues: Ribonuclease PH (246 aa).

Residues Arg91 and 129–131 (GTR) each bind phosphate.

It belongs to the RNase PH family. As to quaternary structure, homohexameric ring arranged as a trimer of dimers.

The enzyme catalyses tRNA(n+1) + phosphate = tRNA(n) + a ribonucleoside 5'-diphosphate. Phosphorolytic 3'-5' exoribonuclease that plays an important role in tRNA 3'-end maturation. Removes nucleotide residues following the 3'-CCA terminus of tRNAs; can also add nucleotides to the ends of RNA molecules by using nucleoside diphosphates as substrates, but this may not be physiologically important. Probably plays a role in initiation of 16S rRNA degradation (leading to ribosome degradation) during starvation. This is Ribonuclease PH from Burkholderia orbicola (strain MC0-3).